The chain runs to 267 residues: Undecaprenyl-diphosphatase (267 aa).

8 helical membrane passes run 1–21, 39–59, 83–103, 111–131, 149–169, 189–209, 218–238, and 246–266; these read MTYFEAFFLALLQGFTEFLPI, QGLAFDVAVHVGTLAAVVIYF, SNLAWLIVLATIPAALFGLLF, LRSAWVIAATTIVFGLLLWWV, ALFLGIAQAMAMIPGTSRSGI, FLMSIPIITLAGSYLGLKLAM, LLSTGVIVSFISAYICIHFFL, and MMPFVIYRILLGSSLLVWLAL.

Belongs to the UppP family.

Its subcellular location is the cell inner membrane. It carries out the reaction di-trans,octa-cis-undecaprenyl diphosphate + H2O = di-trans,octa-cis-undecaprenyl phosphate + phosphate + H(+). In terms of biological role, catalyzes the dephosphorylation of undecaprenyl diphosphate (UPP). Confers resistance to bacitracin. The sequence is that of Undecaprenyl-diphosphatase from Aliivibrio fischeri (strain ATCC 700601 / ES114) (Vibrio fischeri).